The primary structure comprises 102 residues: Trans-acting regulatory protein HvrA (102 aa).

The DNA-binding element occupies 80-85; it reads RGRKPK.

Belongs to the histone-like protein H-NS family. Homodimer that oligomerizes on DNA into higher-order complexes that form bridges between disparate regions of DNA compacting it.

The protein localises to the cytoplasm. It localises to the nucleoid. Its function is as follows. A dim-light trans-acting activator of Puf and Puh expression, that has no effect on the expression of the Puc operon. Responsible for regulating light-harvesting-I and reaction center structural gene expression differentially from that of light-harvesting-II expression in response to alterations in light. Proper light regulation of light-harvesting and reaction center polypeptide synthesis is an important physiological trait that enables cells to adapt to ever-changing environmental conditions of light intensity. This is Trans-acting regulatory protein HvrA (hvrA) from Rhodobacter capsulatus (Rhodopseudomonas capsulata).